We begin with the raw amino-acid sequence, 697 residues long: tRNA 5-methylaminomethyl-2-thiouridine biosynthesis bifunctional protein MnmC (697 aa).

Residues 1 to 272 are tRNA (mnm(5)s(2)U34)-methyltransferase; the sequence is MPKPASMAMN…KREMLTAVMS (272 aa). The interval 300 to 697 is FAD-dependent cmnm(5)s(2)U34 oxidoreductase; it reads IGAGVAGLLT…HKHKTRQAVI (398 aa).

In the N-terminal section; belongs to the methyltransferase superfamily. tRNA (mnm(5)s(2)U34)-methyltransferase family. It in the C-terminal section; belongs to the DAO family. The cofactor is FAD.

It localises to the cytoplasm. The catalysed reaction is 5-aminomethyl-2-thiouridine(34) in tRNA + S-adenosyl-L-methionine = 5-methylaminomethyl-2-thiouridine(34) in tRNA + S-adenosyl-L-homocysteine + H(+). Functionally, catalyzes the last two steps in the biosynthesis of 5-methylaminomethyl-2-thiouridine (mnm(5)s(2)U) at the wobble position (U34) in tRNA. Catalyzes the FAD-dependent demodification of cmnm(5)s(2)U34 to nm(5)s(2)U34, followed by the transfer of a methyl group from S-adenosyl-L-methionine to nm(5)s(2)U34, to form mnm(5)s(2)U34. The chain is tRNA 5-methylaminomethyl-2-thiouridine biosynthesis bifunctional protein MnmC from Psychrobacter cryohalolentis (strain ATCC BAA-1226 / DSM 17306 / VKM B-2378 / K5).